Here is a 163-residue protein sequence, read N- to C-terminus: Phosphopantetheine adenylyltransferase (163 aa).

Substrate is bound at residue threonine 11. Residues 11–12 (TF) and histidine 19 each bind ATP. Positions 43, 75, and 89 each coordinate substrate. Residues 90-92 (GLR), glutamate 100, and 125-131 (YSFISST) contribute to the ATP site.

This sequence belongs to the bacterial CoaD family. In terms of assembly, homohexamer. The cofactor is Mg(2+).

It is found in the cytoplasm. The catalysed reaction is (R)-4'-phosphopantetheine + ATP + H(+) = 3'-dephospho-CoA + diphosphate. It functions in the pathway cofactor biosynthesis; coenzyme A biosynthesis; CoA from (R)-pantothenate: step 4/5. Its function is as follows. Reversibly transfers an adenylyl group from ATP to 4'-phosphopantetheine, yielding dephospho-CoA (dPCoA) and pyrophosphate. This Acinetobacter baumannii (strain SDF) protein is Phosphopantetheine adenylyltransferase.